Reading from the N-terminus, the 136-residue chain is Glutamyl-tRNA(Gln) amidotransferase subunit C, mitochondrial (136 aa).

A mitochondrion-targeting transit peptide spans 1–27; that stretch reads MWARAVHLGLRAAARGRRGFTSKADPQ.

The protein belongs to the GatC family. Subunit of the heterotrimeric GatCAB amidotransferase (AdT) complex, composed of A (QRSL1), B (GATB) and C (GATC) subunits.

It is found in the mitochondrion. The catalysed reaction is L-glutamyl-tRNA(Gln) + L-glutamine + ATP + H2O = L-glutaminyl-tRNA(Gln) + L-glutamate + ADP + phosphate + H(+). In terms of biological role, allows the formation of correctly charged Gln-tRNA(Gln) through the transamidation of misacylated Glu-tRNA(Gln) in the mitochondria. The reaction takes place in the presence of glutamine and ATP through an activated gamma-phospho-Glu-tRNA(Gln). The chain is Glutamyl-tRNA(Gln) amidotransferase subunit C, mitochondrial from Bos taurus (Bovine).